A 275-amino-acid polypeptide reads, in one-letter code: Bis(5'-nucleosyl)-tetraphosphatase, symmetrical (275 aa).

This sequence belongs to the Ap4A hydrolase family.

It carries out the reaction P(1),P(4)-bis(5'-adenosyl) tetraphosphate + H2O = 2 ADP + 2 H(+). Hydrolyzes diadenosine 5',5'''-P1,P4-tetraphosphate to yield ADP. The chain is Bis(5'-nucleosyl)-tetraphosphatase, symmetrical (apaH) from Pasteurella multocida (strain Pm70).